The primary structure comprises 717 residues: Homeobox protein araucan (717 aa).

Disordered regions lie at residues 46–80 (APAM…PNAL), 94–130 (GGSS…GGGG), 317–371 (NKMT…AIDE), 395–418 (SGGY…YHHQ), 478–516 (TPPP…AGRD), 549–615 (TNNS…ASQR), and 675–717 (ARLG…KFTN). Over residues 94–103 (GGSSAGGGGP) the composition is skewed to gly residues. Residues 255–317 (LAARRKNATR…NARRRLKKEN (63 aa)) constitute a DNA-binding region (homeobox; TALE-type). Residues 317–327 (NKMTWEPKNRT) show a composition bias toward basic and acidic residues. Residue Ser-336 is modified to Phosphoserine. Residues 337-347 (DDEKDKEDLEP) are compositionally biased toward basic and acidic residues. Gly residues predominate over residues 395–410 (SGGYPGGGGSSSGHPG). 4 stretches are compositionally biased toward low complexity: residues 492–507 (QQQQ…AQHQ), 559–589 (PPQQ…GPII), 599–614 (QQQQ…TASQ), and 687–698 (SSGNSSSSSSSS).

Belongs to the TALE/IRO homeobox family.

The protein localises to the nucleus. Controls proneural and vein forming genes. Positive transcriptional controller of AC-SC (achaete-scute). May act as an activator that interacts with the transcriptional complex assembled on the AC and SC promoters and participates in transcription initiation. This is Homeobox protein araucan (ara) from Drosophila melanogaster (Fruit fly).